The sequence spans 176 residues: Probable chorismate pyruvate-lyase (176 aa).

Residues R70, L108, and E166 each coordinate substrate.

The protein belongs to the UbiC family.

It is found in the cytoplasm. It carries out the reaction chorismate = 4-hydroxybenzoate + pyruvate. Its pathway is cofactor biosynthesis; ubiquinone biosynthesis. In terms of biological role, removes the pyruvyl group from chorismate, with concomitant aromatization of the ring, to provide 4-hydroxybenzoate (4HB) for the ubiquinone pathway. This Dechloromonas aromatica (strain RCB) protein is Probable chorismate pyruvate-lyase.